The sequence spans 434 residues: Glutamate-1-semialdehyde 2,1-aminomutase (434 aa).

An N6-(pyridoxal phosphate)lysine modification is found at K267.

Belongs to the class-III pyridoxal-phosphate-dependent aminotransferase family. HemL subfamily. As to quaternary structure, homodimer. Pyridoxal 5'-phosphate is required as a cofactor.

The protein localises to the cytoplasm. It catalyses the reaction (S)-4-amino-5-oxopentanoate = 5-aminolevulinate. The protein operates within porphyrin-containing compound metabolism; protoporphyrin-IX biosynthesis; 5-aminolevulinate from L-glutamyl-tRNA(Glu): step 2/2. Its pathway is porphyrin-containing compound metabolism; chlorophyll biosynthesis. The polypeptide is Glutamate-1-semialdehyde 2,1-aminomutase (Roseiflexus castenholzii (strain DSM 13941 / HLO8)).